The following is a 220-amino-acid chain: Ribose-5-phosphate isomerase A (220 aa).

Residues 28–31 (TGST), 81–84 (DGAD), and 94–97 (KGGG) contribute to the substrate site. E103 functions as the Proton acceptor in the catalytic mechanism. K121 serves as a coordination point for substrate.

Belongs to the ribose 5-phosphate isomerase family. Homodimer.

It carries out the reaction aldehydo-D-ribose 5-phosphate = D-ribulose 5-phosphate. The protein operates within carbohydrate degradation; pentose phosphate pathway; D-ribose 5-phosphate from D-ribulose 5-phosphate (non-oxidative stage): step 1/1. In terms of biological role, catalyzes the reversible conversion of ribose-5-phosphate to ribulose 5-phosphate. This chain is Ribose-5-phosphate isomerase A, found in Aromatoleum aromaticum (strain DSM 19018 / LMG 30748 / EbN1) (Azoarcus sp. (strain EbN1)).